A 347-amino-acid chain; its full sequence is MAIDEDKQKAISLAIKQIDKVFGKGALVRLGDKQVEKIDSISTGSLGLDLALGIGGVPKGRIIEIYGPESSGKTTLSLHIIAECQKNGGVCAFIDAEHALDVHYAKRLGVDTENLLVSQPDTGEQALEILETITRSGGIDLVVVDSVAALTPKAEIDGDMGDQHVGLQARLMSHALRKITGVLHKMNTTLIFINQIRMKIGMMGYGSPETTTGGNALKFYASVRIDIRRIAALKQNEQHIGNRAKVKVVKNKVAPPFREAEFDIMFGEGISKEGEIIDYGVKLDIVDKSGAWLSYQDKKLGQGRENAKALLKEDKALANEIILKIKESIGSNEEIMPLPDEPLEEME.

Position 67 to 74 (67 to 74 (GPESSGKT)) interacts with ATP.

It belongs to the RecA family.

The protein localises to the cytoplasm. In terms of biological role, can catalyze the hydrolysis of ATP in the presence of single-stranded DNA, the ATP-dependent uptake of single-stranded DNA by duplex DNA, and the ATP-dependent hybridization of homologous single-stranded DNAs. It interacts with LexA causing its activation and leading to its autocatalytic cleavage. The protein is Protein RecA of Helicobacter acinonychis (strain Sheeba).